The primary structure comprises 435 residues: Eukaryotic translation initiation factor 3 subunit E (435 aa).

One can recognise a PCI domain in the interval 219–392 (FFNHAKGRDL…GHVVMGTQPL (174 aa)).

This sequence belongs to the eIF-3 subunit E family. In terms of assembly, component of the eukaryotic translation initiation factor 3 (eIF-3) complex.

Its subcellular location is the cytoplasm. Component of the eukaryotic translation initiation factor 3 (eIF-3) complex, which is involved in protein synthesis of a specialized repertoire of mRNAs and, together with other initiation factors, stimulates binding of mRNA and methionyl-tRNAi to the 40S ribosome. The eIF-3 complex specifically targets and initiates translation of a subset of mRNAs involved in cell proliferation. In Culex quinquefasciatus (Southern house mosquito), this protein is Eukaryotic translation initiation factor 3 subunit E (eIF3-S6).